Reading from the N-terminus, the 583-residue chain is 5-aminolevulinate synthase, erythroid-specific, mitochondrial (583 aa).

Arg-158 contributes to the succinyl-CoA binding site. Cys-253 and Phe-254 together coordinate pyridoxal 5'-phosphate. The succinyl-CoA site is built by Ser-275 and Arg-294. Residues Ser-327, His-355, and Thr-383 each contribute to the pyridoxal 5'-phosphate site. The active site involves Lys-386. Lys-386 bears the N6-(pyridoxal phosphate)lysine mark. The pyridoxal 5'-phosphate site is built by Thr-415 and Thr-416. Thr-503 is a binding site for succinyl-CoA.

The protein belongs to the class-II pyridoxal-phosphate-dependent aminotransferase family. As to quaternary structure, homodimer. It depends on pyridoxal 5'-phosphate as a cofactor.

It is found in the mitochondrion inner membrane. The enzyme catalyses succinyl-CoA + glycine + H(+) = 5-aminolevulinate + CO2 + CoA. It functions in the pathway porphyrin-containing compound metabolism; protoporphyrin-IX biosynthesis; 5-aminolevulinate from glycine: step 1/1. In terms of biological role, catalyzes the pyridoxal 5'-phosphate (PLP)-dependent condensation of succinyl-CoA and glycine to form aminolevulinic acid (ALA), with CoA and CO2 as by-products. Contributes significantly to heme formation during erythropoiesis. The sequence is that of 5-aminolevulinate synthase, erythroid-specific, mitochondrial (alas2) from Danio rerio (Zebrafish).